Reading from the N-terminus, the 162-residue chain is uncharacterized protein (162 aa).

The helical transmembrane segment at 5 to 25 (IIILFLFTAILCSITLCGCIS) threads the bilayer.

Its subcellular location is the membrane. This is an uncharacterized protein from Methanocaldococcus jannaschii (strain ATCC 43067 / DSM 2661 / JAL-1 / JCM 10045 / NBRC 100440) (Methanococcus jannaschii).